Here is a 460-residue protein sequence, read N- to C-terminus: Elongation factor 1-alpha-B (460 aa).

A N,N,N-trimethylglycine modification is found at Gly-2. An N6,N6-dimethyllysine; alternate modification is found at Lys-3. Residue Lys-3 is modified to N6-methyllysine; alternate. The tr-type G domain maps to 5–240 (KGHINVVVIG…DSIEPPARPT (236 aa)). Residues 14 to 21 (GHVDSGKS) form a G1 region. Position 14–21 (14–21 (GHVDSGKS)) interacts with GTP. Lys-30 bears the N6-methyllysine mark. The G2 stretch occupies residues 70–74 (GITID). Lys-79 carries the post-translational modification N6,N6,N6-trimethyllysine. Residues 91-94 (DAPG) form a G3 region. GTP is bound by residues 91–95 (DAPGH) and 153–156 (NKMD). The tract at residues 153–156 (NKMD) is G4. The tract at residues 192 to 194 (SGF) is G5. At Lys-316 the chain carries N6,N6-dimethyllysine; alternate. At Lys-316 the chain carries N6-methyllysine; alternate. Position 390 is an N6-methyllysine (Lys-390).

Belongs to the TRAFAC class translation factor GTPase superfamily. Classic translation factor GTPase family. EF-Tu/EF-1A subfamily.

The protein resides in the cytoplasm. In terms of biological role, this protein promotes the GTP-dependent binding of aminoacyl-tRNA to the A-site of ribosomes during protein biosynthesis. The chain is Elongation factor 1-alpha-B (tef102) from Schizosaccharomyces pombe (strain 972 / ATCC 24843) (Fission yeast).